Reading from the N-terminus, the 187-residue chain is Elongation factor P 2 (187 aa).

This sequence belongs to the elongation factor P family.

Its subcellular location is the cytoplasm. The protein operates within protein biosynthesis; polypeptide chain elongation. Involved in peptide bond synthesis. Stimulates efficient translation and peptide-bond synthesis on native or reconstituted 70S ribosomes in vitro. Probably functions indirectly by altering the affinity of the ribosome for aminoacyl-tRNA, thus increasing their reactivity as acceptors for peptidyl transferase. The polypeptide is Elongation factor P 2 (Geobacter sulfurreducens (strain ATCC 51573 / DSM 12127 / PCA)).